A 420-amino-acid chain; its full sequence is MDTPSAALHRHTVGQLRKLLLHREGSAGCGRLQPALDGSQPLDSPLSTVPSSRSQVRVQQELWKQDPTYFQKAALSALACMKILRHAFDGGDMEVLGMLLGYVQDEMIVVVDSYRLPVEGTETRVNAQMESYEYTVQYLETAVPEGLAIVGWYHSHPGYGCWLSGIDAETQTLNQNFQDPYLAIVVDPKRSKASGVIDIGAFRTMPETADTRSVSSHSNASRYGHHSARYYELEVSYFEVPQERRWCDSRLSVEPPKPADATERAMLAQLLEAAKACKNVKRLQTVDRALVPESIGPYALREQADQDLQFRRPLRSFSSNSIARRSSTEVALGNANEELDPLPTLADANLRNHDSPSADMAMDNTSISSNEEQPHLTFQESSGVQLNAAETEYFDIKNELLTLKLLEYQKARFYRDAFTL.

Residues 73–208 (AALSALACMK…IGAFRTMPET (136 aa)) enclose the MPN domain. Positions 154, 156, and 167 each coordinate Zn(2+). The JAMM motif motif lies at 154–167 (HSHPGYGCWLSGID).

The protein belongs to the peptidase M67A family. CSN5 subfamily. As to quaternary structure, component of the COP9 signalosome (CSN) complex.

It localises to the cytoplasm. The protein localises to the nucleus. Functionally, catalytic component of the COP9 signalosome (CSN) complex that acts as an regulator of the ubiquitin (Ubl) conjugation pathway by mediating the deneddylation of the cullin subunit of SCF-type E3 ubiquitin-protein ligase complexes. The CSN complex is involved in the regulation of the mating pheromone response. This chain is COP9 signalosome complex subunit 5 (RRI1), found in Eremothecium gossypii (strain ATCC 10895 / CBS 109.51 / FGSC 9923 / NRRL Y-1056) (Yeast).